The following is a 352-amino-acid chain: Pejvakin (352 aa).

Belongs to the gasdermin family. As to quaternary structure, interacts with MAP1LC3B; interaction is direct. Interacts with IQGAP1. Interacts with ROCK2. Interacts with TRIOBP.

The protein localises to the peroxisome membrane. It is found in the cell projection. It localises to the cilium. Functionally, peroxisome-associated protein required to protect auditory hair cells against noise-induced damage. Acts by regulating noise-induced peroxisome proliferation in auditory hair cells and neurons, and promoting autophagic degradation of damaged peroxisomes (pexophagy). Noise overexposure increases reactive oxygen species (ROS) levels, causing oxidative damage to auditory hair cells and resulting in hearing loss. PJVK acts as a ROS sensor that recruits the autophagy machinery to trigger pexophagy of peroxisomes damaged by oxidative stress. In addition to pexophagy, also required to promote peroxisome proliferation in response to sound overstimulation. The protein is Pejvakin of Homo sapiens (Human).